Consider the following 183-residue polypeptide: uncharacterized protein (183 aa).

It belongs to the herpesviridae US1 family.

This is an uncharacterized protein from Human cytomegalovirus (strain AD169) (HHV-5).